Here is a 519-residue protein sequence, read N- to C-terminus: Cilia- and flagella-associated protein 53 (519 aa).

Coiled coils occupy residues 80–107 and 210–339; these read NRHLQDALDQYQMGIDEKRERLRELLES and LAKE…QEEQ. The interval 498 to 519 is disordered; it reads TTAVHPFRRRDRRCSSSGGQMS.

The protein belongs to the CFAP53 family.

The protein resides in the cytoplasm. Its subcellular location is the cytoskeleton. The protein localises to the cilium axoneme. It is found in the cilium basal body. Functionally, microtubule inner protein (MIP) part of the dynein-decorated doublet microtubules (DMTs) in cilia axoneme, which is required for motile cilia beating. Regulates motility patterns of both 9+0 and 9+2 motile cilia through differential localization and recruitment of axonemal dynein components. Required for cilium motility within the spinal canal and Kuppfer's vesicle and is involved in the establishment of left-right symmetry during embryogenesis. This chain is Cilia- and flagella-associated protein 53, found in Danio rerio (Zebrafish).